The chain runs to 76 residues: UPF0291 protein BT9727_1737 (76 aa).

Belongs to the UPF0291 family.

It localises to the cytoplasm. The chain is UPF0291 protein BT9727_1737 from Bacillus thuringiensis subsp. konkukian (strain 97-27).